We begin with the raw amino-acid sequence, 423 residues long: Serine--tRNA ligase (423 aa).

230–232 serves as a coordination point for L-serine; that stretch reads TAE. Position 261–263 (261–263) interacts with ATP; sequence RSE. L-serine is bound at residue Glu-284. Residue 348–351 participates in ATP binding; that stretch reads EISS. Ser-383 provides a ligand contact to L-serine.

It belongs to the class-II aminoacyl-tRNA synthetase family. Type-1 seryl-tRNA synthetase subfamily. Homodimer. The tRNA molecule binds across the dimer.

The protein resides in the cytoplasm. It carries out the reaction tRNA(Ser) + L-serine + ATP = L-seryl-tRNA(Ser) + AMP + diphosphate + H(+). The catalysed reaction is tRNA(Sec) + L-serine + ATP = L-seryl-tRNA(Sec) + AMP + diphosphate + H(+). The protein operates within aminoacyl-tRNA biosynthesis; selenocysteinyl-tRNA(Sec) biosynthesis; L-seryl-tRNA(Sec) from L-serine and tRNA(Sec): step 1/1. Catalyzes the attachment of serine to tRNA(Ser). Is also able to aminoacylate tRNA(Sec) with serine, to form the misacylated tRNA L-seryl-tRNA(Sec), which will be further converted into selenocysteinyl-tRNA(Sec). The chain is Serine--tRNA ligase from Levilactobacillus brevis (strain ATCC 367 / BCRC 12310 / CIP 105137 / JCM 1170 / LMG 11437 / NCIMB 947 / NCTC 947) (Lactobacillus brevis).